The primary structure comprises 244 residues: MSTSKRKRADEAQWNKRSTKKKGSAPQAKKPGGKVEKPSLQIQTLLHSGDTMITVPSGGVCDLINTYARGSDEGNRHTSETLTYKVGVDYHFVADAASCKYSNRGTGVMWLVYDTTPGGNAPTTQDIFAYPSALKAWPTTWKVSRELCHRFVVKRRWLFTMETDGRIGSDTPPSNQSWPPCKRNVDFHKFTSGLGVRTQWKNVTDGGVGAIQRGALYLVIAPGNGITFTAHGQTRLYFKSVGNQ.

The short motif at 1–24 (MSTSKRKRADEAQWNKRSTKKKGS) is the Bipartite nuclear localization signal element. The tract at residues 1–39 (MSTSKRKRADEAQWNKRSTKKKGSAPQAKKPGGKVEKPS) is disordered.

It belongs to the geminiviridae capsid protein family. As to quaternary structure, homomultimer. Interacts with the movement protein. Binds to single-stranded and double-stranded viral DNA.

The protein resides in the virion. It is found in the host nucleus. Its function is as follows. Encapsidates the viral genome into characteristic twinned ('geminate') particles. Binds the genomic viral ssDNA and shuttles it into and out of the cell nucleus. Plays a role in protection of the genome from degradation, virus acquisition and transmission by insect vectors, infectivity, and systemic movement. The CP of monopartite geminiviruses is absolutely essential for virus movement. The sequence is that of Capsid protein from Avena sativa (Oat).